A 75-amino-acid chain; its full sequence is Veswaprin-b (75 aa).

The signal sequence occupies residues 1 to 24 (MSSGGLLLLLGLLTLWAELTPISG). The interval 23–42 (SGQDRPKKPGLRPPRPQKPP) is disordered. The 46-residue stretch at 27-72 (RPKKPGLRPPRPQKPPCVRECKNDWRCPGEQKCCRYGCIYECRDPI) folds into the WAP; atypical domain. Intrachain disulfides connect C43–C64, C47–C59, and C53–C68.

The protein belongs to the venom waprin family. As to expression, expressed by the venom gland.

It is found in the secreted. Functionally, damages membranes of susceptible bacteria. Has no hemolytic activity. Not toxic to mice. Does not inhibit the proteinases elastase and cathepsin G. The polypeptide is Veswaprin-b (Demansia vestigiata (Lesser black whip snake)).